The chain runs to 103 residues: UPF0145 protein BCE_5284 (103 aa).

Belongs to the UPF0145 family.

This chain is UPF0145 protein BCE_5284, found in Bacillus cereus (strain ATCC 10987 / NRS 248).